The chain runs to 541 residues: 2-hydroxyacylsphingosine 1-beta-galactosyltransferase (541 aa).

Positions 1–20 (MKSYTPYFMLLWSAVGIARA) are cleaved as a signal peptide. N-linked (GlcNAc...) asparagine glycosylation is found at Asn-78, Asn-333, and Asn-442. The chain crosses the membrane as a helical span at residues 472–492 (YFLLDIAFVLLLGAVLLYFIL). The interval 518–541 (HYQNGIRNGKYKGNGRVKHEKKVR) is disordered. The span at 526 to 541 (GKYKGNGRVKHEKKVR) shows a compositional bias: basic residues.

The protein belongs to the UDP-glycosyltransferase family.

It is found in the membrane. The protein localises to the endoplasmic reticulum. The enzyme catalyses an N-acylsphing-4-enine + UDP-alpha-D-galactose = a beta-D-galactosyl-(1&lt;-&gt;1')-N-acylsphing-4-enine + UDP + H(+). The catalysed reaction is N-(2-hydroxy-hexanoyl)-sphing-4-enine + UDP-alpha-D-galactose = N-(2-hydroxy-hexanoyl)-beta-D-galactosyl-sphing-4-enine + UDP + H(+). It carries out the reaction N-(2-hydroxy-hexanoyl)-sphinganine + UDP-alpha-D-galactose = N-(2-hydroxyhexanoyl)-beta-D-galactosylsphinganine + UDP + H(+). It catalyses the reaction an N-acyl-sphingoid base + UDP-alpha-D-galactose = a D-galactosylceramide + UDP + H(+). It participates in sphingolipid metabolism; galactosylceramide biosynthesis. Catalyzes the transfer of galactose to ceramide, a key enzymatic step in the biosynthesis of galactocerebrosides, which are abundant sphingolipids of the myelin membrane of the central nervous system and peripheral nervous system. Galactosylates both hydroxy- and non-hydroxy fatty acid-containing ceramides and diglycerides. This chain is 2-hydroxyacylsphingosine 1-beta-galactosyltransferase, found in Mus musculus (Mouse).